We begin with the raw amino-acid sequence, 458 residues long: MANNHHPKDEAYLSSVIPKRIRLFEEIQAEQLEQLQSRPHDPIKITLLPDGIEKEGRRWETSPMDIAVQISKGLAKSALVSSVNHVLWDMNRPLEGDCSLEIFGFDSDQGRNTFWHSSAHILGQALEQEYGCKLCIGPCEPRDEGFYYDSLYYGELGLNDNHFPNIEAKLPIRMAEFGVLHRNEDSGALGGMTRVRRFVQDDAHIFCRVDQVEEEVKGVLDFIDYVYRIFGFTYELTLSTRPKDHIGDLETWAKAENDLEKALDDFGKPWVIKEGDGAFYGPKIDITVSDARNRKFQCATIQLDFQLPACFKLKYLSEKNEMEAPVMIHSAVLGSIERMFAILLEHYKGIWPFWLSPRQAIVCSLSEDCSSYAKQVQKQINEVGYYVDIDESDRSLRKKVADARDAPYNYILVVGQKEVATGQVTVRLREDPEGRKDLPEMSIESLLDEFKFKTVNFL.

The region spanning 41–104 (DPIKITLLPD…EGDCSLEIFG (64 aa)) is the TGS domain.

This sequence belongs to the class-II aminoacyl-tRNA synthetase family.

The protein resides in the cytoplasm. The enzyme catalyses tRNA(Thr) + L-threonine + ATP = L-threonyl-tRNA(Thr) + AMP + diphosphate + H(+). The polypeptide is Probable threonine--tRNA ligase, cytoplasmic (Arabidopsis thaliana (Mouse-ear cress)).